We begin with the raw amino-acid sequence, 525 residues long: AarF domain-containing protein kinase 1 (525 aa).

Residues 148-477 (SFDDTPLGAA…HKKRDAGSFF (330 aa)) form the Protein kinase domain. Residues 154 to 162 (LGAASLAQV) and K176 each bind ATP. The Proton acceptor role is filled by D308.

This sequence belongs to the protein kinase superfamily. ADCK protein kinase family.

Its subcellular location is the mitochondrion. Appears to be essential for maintaining mitochondrial cristae formation and mitochondrial function by acting via YME1L1 in a kinase-independent manner to regulate essential mitochondrial structural proteins OPA1 and IMMT. The action of this enzyme is not yet clear. It is not known if it has protein kinase activity and what type of substrate it would phosphorylate (Ser, Thr or Tyr). The polypeptide is AarF domain-containing protein kinase 1 (Adck1) (Mus musculus (Mouse)).